The chain runs to 722 residues: Ribosomal RNA large subunit methyltransferase K/L (722 aa).

The region spanning threonine 55–leucine 167 is the THUMP domain.

This sequence belongs to the methyltransferase superfamily. RlmKL family.

The protein resides in the cytoplasm. It carries out the reaction guanosine(2445) in 23S rRNA + S-adenosyl-L-methionine = N(2)-methylguanosine(2445) in 23S rRNA + S-adenosyl-L-homocysteine + H(+). The enzyme catalyses guanosine(2069) in 23S rRNA + S-adenosyl-L-methionine = N(2)-methylguanosine(2069) in 23S rRNA + S-adenosyl-L-homocysteine + H(+). Specifically methylates the guanine in position 2445 (m2G2445) and the guanine in position 2069 (m7G2069) of 23S rRNA. This chain is Ribosomal RNA large subunit methyltransferase K/L, found in Desulfotalea psychrophila (strain LSv54 / DSM 12343).